A 171-amino-acid polypeptide reads, in one-letter code: Apoptosis regulator Bcl-2 homolog (171 aa).

As to quaternary structure, interacts with host BECN1; this interaction inhibits host autophagy. Interacts with host BAK1 and BAX.

The protein resides in the host cytoplasm. In terms of biological role, plays a role in the protection against apoptosis mediated by cytotoxic cells during the immune response to acute and persistent viral infection. Contributes therefore to latency establishment. Plays also a role in the inhibition of host starvation-induced autophagy which ultimately contributes to the viral chronic infection. This Murid herpesvirus 4 (MuHV-4) protein is Apoptosis regulator Bcl-2 homolog (vBCL2).